The following is a 1235-amino-acid chain: Phosphorylase b kinase regulatory subunit alpha, liver isoform (1235 aa).

The segment at 636–655 (FSPDSEPDLGGYLEDSSPQE) is disordered. Phosphoserine is present on residues S695, S729, and S735. Residues 807–837 (LSELYGKAGLNQEWSLIRYISGLLRKKVEVL) form a calmodulin-binding region. Phosphoserine occurs at positions 983, 1015, and 1044. The interval 1033–1060 (SIKSVRSSTPSSPTGTSSTDSGGQHLGW) is disordered. The segment covering 1039–1055 (SSTPSSPTGTSSTDSGG) has biased composition (low complexity). The segment at 1059–1099 (GWGEQQGQWLRRRRLDGAINRVPVGFYQKVWKILQKCHGLS) is calmodulin-binding. Residue C1232 is the site of S-farnesyl cysteine attachment.

The protein belongs to the phosphorylase b kinase regulatory chain family. As to quaternary structure, hexadecamer of 4 heterotetramers, each composed of alpha, beta, gamma, and delta subunits. Alpha (PHKA1 or PHKA2) and beta (PHKB) are regulatory subunits, gamma (PHKG1 or PHKG2) is the catalytic subunit, and delta is calmodulin. Post-translationally, although the final Cys may be farnesylated, the terminal tripeptide is probably not removed, and the C-terminus is not methylated.

It localises to the cell membrane. Its pathway is glycan biosynthesis; glycogen metabolism. With respect to regulation, by phosphorylation of various serine residues and by calcium. Its function is as follows. Phosphorylase b kinase catalyzes the phosphorylation of serine in certain substrates, including troponin I. The alpha chain may bind calmodulin. In Mus musculus (Mouse), this protein is Phosphorylase b kinase regulatory subunit alpha, liver isoform (Phka2).